The following is a 437-amino-acid chain: RING finger protein 150 (437 aa).

Residues 1-34 (MTMSLIQACRSLALSTWLLSFCFVHLLCLDFTVA) form the signal peptide. The Extracellular portion of the chain corresponds to 35–207 (EKEEWYTAFV…NLQKYVSRTS (173 aa)). N-linked (GlcNAc...) asparagine glycans are attached at residues Asn-45, Asn-124, Asn-152, and Asn-185. One can recognise a PA domain in the interval 80–182 (SPKQDARGEV…PKGKEIVSLL (103 aa)). A helical transmembrane segment spans residues 208-228 (VVFVSISFIVLMIISLAWLVF). Topologically, residues 229–437 (YYIQRFRYAN…TDQDCEEVKS (209 aa)) are cytoplasmic. Residues 277–318 (CAVCIEGYKPNDVVRILPCRHLFHKSCVDPWLLDHRTCPMCK) form an RING-type; atypical zinc finger.

It localises to the membrane. The protein is RING finger protein 150 (Rnf150) of Mus musculus (Mouse).